We begin with the raw amino-acid sequence, 278 residues long: Protein canopy homolog 3 (278 aa).

A signal peptide spans 1-30 (MDSMPEPASRCLLLLPLLLLLLLLLPAPEL). The Saposin B-type domain maps to 47-271 (SKCEVCKYVA…EGIQKASPLT (225 aa)). Intrachain disulfides connect Cys49–Cys206, Cys52–Cys194, and Cys104–Cys166. Asn153 is a glycosylation site (N-linked (GlcNAc...) asparagine). Positions 153–179 (NETSAEVADLKKQCDVLVEEFEEVIED) form a coiled coil. Residues 215 to 278 (KGDTAALGGK…PLTHSPPDEL (64 aa)) form a disordered region. The segment covering 233-243 (AKAAGGRSSSS) has biased composition (low complexity).

This sequence belongs to the canopy family. Interacts with HSP90B1; this interaction is disrupted in the presence of ATP. Interacts with TLR1, TLR2, TLR4 and TLR9. Strongest interaction with TLR4.

The protein resides in the endoplasmic reticulum. Its function is as follows. Toll-like receptor (TLR)-specific co-chaperone for HSP90B1. Required for proper TLR folding, except that of TLR3, and hence controls TLR exit from the endoplasmic reticulum. Consequently, required for both innate and adaptive immune responses. In Homo sapiens (Human), this protein is Protein canopy homolog 3 (CNPY3).